Reading from the N-terminus, the 712-residue chain is Patatin-like phospholipase domain-containing protein NFIA_019760 (712 aa).

A compositionally biased stretch (basic and acidic residues) spans methionine 1 to tyrosine 13. Residues methionine 1–tyrosine 21 are disordered. A helical membrane pass occupies residues tryptophan 85–threonine 105. The region spanning leucine 275 to asparagine 466 is the PNPLA domain. A GXSXG motif is present at residues glycine 306–glycine 310. The active-site Nucleophile is serine 308. The active-site Proton acceptor is the aspartate 453. Residues arginine 628–phenylalanine 687 form a disordered region. Basic and acidic residues-rich tracts occupy residues aspartate 632–aspartate 646 and arginine 652–glutamate 664. Residues valine 665–proline 676 are compositionally biased toward polar residues. Residues histidine 677 to phenylalanine 687 are compositionally biased toward basic and acidic residues.

The protein belongs to the PLPL family.

The protein localises to the membrane. Its function is as follows. Probable lipid hydrolase. The protein is Patatin-like phospholipase domain-containing protein NFIA_019760 of Neosartorya fischeri (strain ATCC 1020 / DSM 3700 / CBS 544.65 / FGSC A1164 / JCM 1740 / NRRL 181 / WB 181) (Aspergillus fischerianus).